The following is a 272-amino-acid chain: MWPRVLLGEARVAVDGCRALLSRLAVHFSPPWTAVSCSPLRRSLHGTATRAFPLIPIVVEQTGRGERAYDIYSRLLRERIVCVMGPIDDSVASLVIAQLLFLQSESNKKPIHMYINSPGGVVTAGLAIYDTMQYILNPICTWCVGQAASMGSLLLAAGSPGMRHSLPNSRIMIHQPSGGARGQATDIAIQAEEIMKLKKQLYNIYAKHTKQSLQVIESAMERDRYMSPMEAQEFGILDKVLVHPPQDGEDEPELVQKETATAPTDPPAPTST.

The transit peptide at 1–52 (MWPRVLLGEARVAVDGCRALLSRLAVHFSPPWTAVSCSPLRRSLHGTATRAF) directs the protein to the mitochondrion. The active-site Nucleophile is the Ser-149. His-174 is an active-site residue. The residue at position 196 (Lys-196) is an N6-succinyllysine. Lys-207 carries the post-translational modification N6-acetyllysine. Residues 240–272 (VLVHPPQDGEDEPELVQKETATAPTDPPAPTST) are disordered.

This sequence belongs to the peptidase S14 family. In terms of assembly, fourteen CLPP subunits assemble into 2 heptameric rings which stack back to back to give a disk-like structure with a central cavity. Component of the ClpXP complex formed by the assembly of two CLPP heptameric rings with two CLPX hexameric rings, giving rise to a symmetrical structure with two central CLPP rings flanked by a CLPX ring at either end of the complex. In terms of tissue distribution, detected in liver (at protein level). High levels found in heart, liver and skeletal muscle.

The protein resides in the mitochondrion matrix. The catalysed reaction is Hydrolysis of proteins to small peptides in the presence of ATP and magnesium. alpha-casein is the usual test substrate. In the absence of ATP, only oligopeptides shorter than five residues are hydrolyzed (such as succinyl-Leu-Tyr-|-NHMec, and Leu-Tyr-Leu-|-Tyr-Trp, in which cleavage of the -Tyr-|-Leu- and -Tyr-|-Trp bonds also occurs).. Protease component of the ClpXP complex that cleaves peptides and various proteins in an ATP-dependent process. Has low peptidase activity in the absence of CLPX. The ClpXP complex can degrade CSN1S1, CSN2 and CSN3, as well as synthetic peptides (in vitro) and may be responsible for a fairly general and central housekeeping function rather than for the degradation of specific substrates. Cleaves PINK1 in the mitochondrion. This is ATP-dependent Clp protease proteolytic subunit, mitochondrial from Mus musculus (Mouse).